The chain runs to 776 residues: Protein STRUBBELIG-RECEPTOR FAMILY 3 (776 aa).

Residues 1–29 form the signal peptide; the sequence is MAAKRSIYCLLLLPLLLSLLIWIPSISLA. Topologically, residues 30–35 are cytoplasmic; it reads ATNPDD. A helical transmembrane segment spans residues 36–56; the sequence is VAAINGLFAALGAPVLPGWIA. Residues 57–316 are Extracellular-facing; sequence SGGDPCGEAW…KGKNSSHTKK (260 aa). N-linked (GlcNAc...) asparagine glycosylation is present at N72. LRR repeat units lie at residues 99–120, 121–143, 145–167, 169–191, 193–215, and 216–236; these read SIRG…TLPV, TLQH…LGTL, FLND…FQNL, GLIN…MENL, TLTT…QGLP, and LQDL…KLLS. N179 carries an N-linked (GlcNAc...) asparagine glycan. Residues N248 and N253 are each glycosylated (N-linked (GlcNAc...) asparagine). Positions 251-311 are disordered; that stretch reads MINSTSTAPS…SSENSKGKNS (61 aa). Over residues 254 to 268 the composition is skewed to low complexity; sequence STSTAPSLSPSLSPT. A compositionally biased stretch (pro residues) spans 269 to 284; that stretch reads KPAPTRPFSGVPPPPN. Residues 298–309 show a composition bias toward low complexity; it reads SEGSSSENSKGK. N310 carries N-linked (GlcNAc...) asparagine glycosylation. The helical transmembrane segment at 317 to 337 threads the bilayer; the sequence is IILIAFAGVLVFIILVLAILL. Over 338–776 the chain is Cytoplasmic; sequence LLPKCARRRE…RHGSGDSTAD (439 aa). The disordered stretch occupies residues 355 to 440; sequence PHQVGADRGS…PPPPPPPPPP (86 aa). The span at 381–407 shows a compositional bias: basic and acidic residues; it reads RSEKVQREPFKKAGEEPKVLHDLERLR. The segment covering 426 to 440 has biased composition (pro residues); that stretch reads MPPPPPPPPPPPPPP. Residues 485 to 763 enclose the Protein kinase domain; sequence FAQENLIGSG…EVVQDLLDMI (279 aa). Residues 491–499 and K513 each bind ATP; that span reads IGSGMLGSV.

This sequence belongs to the protein kinase superfamily. Ser/Thr protein kinase family. Expressed in seedlings, roots, stems, leaves, flowers and siliques.

Its subcellular location is the membrane. Its function is as follows. Not essential for epidermal patterning and not redundant with STRUBBELIG. This is Protein STRUBBELIG-RECEPTOR FAMILY 3 (SRF3) from Arabidopsis thaliana (Mouse-ear cress).